We begin with the raw amino-acid sequence, 220 residues long: Protein-methionine-sulfoxide reductase heme-binding subunit MsrQ (220 aa).

6 consecutive transmembrane segments (helical) span residues 20-40 (LWLL…LGAT), 51-71 (FEHL…LVTP), 86-106 (ALGL…MVLD), 122-142 (PFIT…LTSN), 153-173 (WSSL…HFLM), and 175-195 (VKSW…LLLW).

Belongs to the MsrQ family. In terms of assembly, heterodimer of a catalytic subunit (MsrP) and a heme-binding subunit (MsrQ). FMN serves as cofactor. The cofactor is heme b.

The protein resides in the cell inner membrane. In terms of biological role, part of the MsrPQ system that repairs oxidized periplasmic proteins containing methionine sulfoxide residues (Met-O), using respiratory chain electrons. Thus protects these proteins from oxidative-stress damage caused by reactive species of oxygen and chlorine generated by the host defense mechanisms. MsrPQ is essential for the maintenance of envelope integrity under bleach stress, rescuing a wide series of structurally unrelated periplasmic proteins from methionine oxidation. MsrQ provides electrons for reduction to the reductase catalytic subunit MsrP, using the quinone pool of the respiratory chain. In Brucella melitensis biotype 2 (strain ATCC 23457), this protein is Protein-methionine-sulfoxide reductase heme-binding subunit MsrQ.